Reading from the N-terminus, the 457-residue chain is Transcription factor PCF7 (457 aa).

A coiled-coil region spans residues 58-84 (STLHYLLQEKERAQQAHEQLQIYQQQQ). Residues 95–121 (RQPASRGPGGGGGGGDGGGSSGESTPV) are disordered. Positions 101–115 (GPGGGGGGGDGGGSS) are enriched in gly residues. The TCP domain occupies 140 to 198 (RKDRHSKVCTARGLRDRRVRLAAHTAIRFYDVQDRLGYDRPSKAVDWLMRNAKAAIDEL). 2 disordered regions span residues 199–231 (PDRA…GFGN) and 263–299 (KSLF…SNQQ). The segment covering 212–230 (STEQPEGTEQANSTSYGFG) has biased composition (polar residues). Residues 268–278 (SSSTASGAASA) are compositionally biased toward low complexity.

In terms of assembly, forms homodimers and heterodimers.

The protein localises to the nucleus. Functionally, transcription activator. Binds the promoter core sequence 5'-GGNCC-3'. The chain is Transcription factor PCF7 (PCF7) from Oryza sativa subsp. indica (Rice).